Reading from the N-terminus, the 89-residue chain is Small ribosomal subunit protein uS15 (89 aa).

The interval M1 to S24 is disordered. Residues Q7 to P19 are compositionally biased toward basic and acidic residues.

The protein belongs to the universal ribosomal protein uS15 family. In terms of assembly, part of the 30S ribosomal subunit. Forms a bridge to the 50S subunit in the 70S ribosome, contacting the 23S rRNA.

In terms of biological role, one of the primary rRNA binding proteins, it binds directly to 16S rRNA where it helps nucleate assembly of the platform of the 30S subunit by binding and bridging several RNA helices of the 16S rRNA. Its function is as follows. Forms an intersubunit bridge (bridge B4) with the 23S rRNA of the 50S subunit in the ribosome. This Halorhodospira halophila (strain DSM 244 / SL1) (Ectothiorhodospira halophila (strain DSM 244 / SL1)) protein is Small ribosomal subunit protein uS15.